The primary structure comprises 524 residues: Glucose-6-phosphate 1-dehydrogenase (524 aa).

The residue at position 20 (Ser-20) is a Phosphoserine. NADP(+)-binding positions include 42-49 (GASGDLAK), Arg-76, and Lys-175. Residues Lys-175, 205–209 (HYLGK), Glu-243, and Asp-262 contribute to the D-glucose 6-phosphate site. His-267 acts as the Proton acceptor in catalysis. Arg-362 contributes to the NADP(+) binding site. D-glucose 6-phosphate is bound by residues Lys-365 and Arg-370. 3 residues coordinate NADP(+): Lys-371, Arg-375, and Arg-398. Gln-400 serves as a coordination point for D-glucose 6-phosphate. NADP(+)-binding positions include 406–408 (YFK), 426–428 (DLT), Arg-492, Tyr-508, and Trp-514.

Belongs to the glucose-6-phosphate dehydrogenase family.

It localises to the cytoplasm. Its subcellular location is the cytosol. It catalyses the reaction D-glucose 6-phosphate + NADP(+) = 6-phospho-D-glucono-1,5-lactone + NADPH + H(+). The protein operates within carbohydrate degradation; pentose phosphate pathway; D-ribulose 5-phosphate from D-glucose 6-phosphate (oxidative stage): step 1/3. Its function is as follows. Cytosolic glucose-6-phosphate dehydrogenase that catalyzes the first and rate-limiting step of the oxidative branch within the pentose phosphate pathway/shunt, an alternative route to glycolysis for the dissimilation of carbohydrates and a major source of reducing power and metabolic intermediates for fatty acid and nucleic acid biosynthetic processes. This Drosophila melanogaster (Fruit fly) protein is Glucose-6-phosphate 1-dehydrogenase.